A 674-amino-acid chain; its full sequence is Probable copper-transporting P-type ATPase B (674 aa).

The tract at residues 1–22 is disordered; the sequence is MNHSNQMHHDNHESHNHHSGHA. Over residues 7–16 the composition is skewed to basic and acidic residues; it reads MHHDNHESHN. A run of 6 helical transmembrane segments spans residues 32–52, 57–77, 95–115, 127–147, 284–304, and 315–335; these read FFVS…MGIN, FTFP…FFYG, GMMT…LYAF, TMDF…GHWI, GYLF…WMLI, and LVTV…PLVT. Asp-367 functions as the 4-aspartylphosphate intermediate in the catalytic mechanism. Mg(2+)-binding residues include Asp-565 and Asp-569. 2 helical membrane passes run 623-645 and 649-671; these read LWWG…AFVG and SPAV…AFTL.

It belongs to the cation transport ATPase (P-type) (TC 3.A.3) family. Type IB subfamily.

It localises to the cell membrane. It catalyses the reaction Cu(+)(in) + ATP + H2O = Cu(+)(out) + ADP + phosphate + H(+). Functionally, involved in copper transport. This is Probable copper-transporting P-type ATPase B (copB) from Staphylococcus epidermidis (strain ATCC 12228 / FDA PCI 1200).